A 150-amino-acid chain; its full sequence is Avidin-related protein 1 (150 aa).

A signal peptide spans 1 to 24 (MVHATSPLLLLLLLSLALVAPGLS). Residues 26–147 (RKCSLTGKWD…GNNDFTRQRT (122 aa)) enclose the Avidin-like domain. Cysteine 28 and cysteine 105 are disulfide-bonded. Residues asparagine 36 and serine 40 each contribute to the biotin site. N-linked (GlcNAc...) asparagine glycosylation is present at asparagine 54. Positions 57, 59, and 63 each coordinate biotin. Asparagine 67 and asparagine 93 each carry an N-linked (GlcNAc...) asparagine glycan. Biotin contacts are provided by serine 95, serine 99, and asparagine 140.

Belongs to the avidin/streptavidin family. In terms of assembly, homotetramer. Post-translationally, glycosylated.

It localises to the secreted. Forms a strong non-covalent specific complex with biotin. The sequence is that of Avidin-related protein 1 (AVR1) from Gallus gallus (Chicken).